Reading from the N-terminus, the 449-residue chain is CCAAT/enhancer-binding protein (449 aa).

3 disordered regions span residues 211–233 (HATYNNSSDENSSVGSDSSTIKE), 276–302 (GNPLNGGNTTPSSNGSNGSTGSSNGSQ), and 334–386 (SKLH…KAKV). Low complexity-rich tracts occupy residues 215–229 (NNSSDENSSVGSDSS), 280–301 (NGGNTTPSSNGSNGSTGSSNGS), and 339–349 (QQQHQQHQQQQ). The segment covering 357–368 (KHVDKGTDEYRR) has biased composition (basic and acidic residues). A bZIP domain is found at 363 to 426 (TDEYRRRRER…QLHKQIYMQL (64 aa)). Residues 367–396 (RRRRERNNIAVRKSREKAKVRSREVEERVK) are basic motif. The interval 398 to 405 (LLKEKDAL) is leucine-zipper.

The protein belongs to the bZIP family. C/EBP subfamily. In terms of assembly, binds DNA as a dimer and can form stable heterodimers. Interacts with trbl. In terms of processing, ubiquitination/deubiquitination regulates border cell migration. Ubiquitination is stimulated by trbl, which leads to proteasomal degradation and inhibits border cell migration. Deubiquitination by Usp47, leads to its stabilization and promotes border cell migration.

The protein resides in the nucleus. Functionally, required for the expression of gene products mediating border cell migration. Among the DNA sequences that this protein binds with high affinity is a conserved site within the promoter of its gene. The sequence is that of CCAAT/enhancer-binding protein (slbo) from Drosophila melanogaster (Fruit fly).